The sequence spans 138 residues: Nucleoside diphosphate kinase (138 aa).

6 residues coordinate ATP: K9, F57, R85, T91, R102, and N112. H115 serves as the catalytic Pros-phosphohistidine intermediate.

Belongs to the NDK family. As to quaternary structure, homotetramer. Requires Mg(2+) as cofactor.

The protein resides in the cytoplasm. It carries out the reaction a 2'-deoxyribonucleoside 5'-diphosphate + ATP = a 2'-deoxyribonucleoside 5'-triphosphate + ADP. The enzyme catalyses a ribonucleoside 5'-diphosphate + ATP = a ribonucleoside 5'-triphosphate + ADP. Its function is as follows. Major role in the synthesis of nucleoside triphosphates other than ATP. The ATP gamma phosphate is transferred to the NDP beta phosphate via a ping-pong mechanism, using a phosphorylated active-site intermediate. In Desulfatibacillum aliphaticivorans, this protein is Nucleoside diphosphate kinase.